The sequence spans 285 residues: Putative sugar uptake protein lin0444 (285 aa).

Transmembrane regions (helical) follow at residues 2-21 (SIYL…PIIA), 31-50 (QLLG…FWIL), 55-77 (TVLS…LLQF), 111-133 (WQTV…GVVM), 146-168 (SVSF…YVVT), 172-194 (FDVT…AIGI), 207-229 (VTFN…LATA), 233-255 (VATS…ILIF), and 262-284 (LEWT…LSLL).

Belongs to the GRP transporter (TC 2.A.7.5) family.

The protein localises to the cell membrane. In Listeria innocua serovar 6a (strain ATCC BAA-680 / CLIP 11262), this protein is Putative sugar uptake protein lin0444.